Consider the following 272-residue polypeptide: RELT-like protein 1 (272 aa).

A signal peptide spans 1–23; it reads MALWGLPGSAVLAASVFVGGAVS. Over 24–58 the chain is Extracellular; the sequence is SPLVAADNTGSHTLHSRAETTPSSPTNNPGNGHPE. The disordered stretch occupies residues 33–52; it reads GSHTLHSRAETTPSSPTNNP. A helical transmembrane segment spans residues 59 to 79; the sequence is YIAYVLVPVFFVMGLLGVLIC. Residues 80-272 lie on the Cytoplasmic side of the membrane; it reads HLLKKKGYRC…PVKRERSDTE (193 aa). Residues 90–114 are a coiled coil; it reads TTEAEQEVEEEKVEKIELNDSINEN. A phosphoserine mark is found at Ser110 and Ser115. Disordered stretches follow at residues 146-171 and 235-272; these read DIES…PGAT and EHKS…SDTE. Over residues 156 to 166 the composition is skewed to pro residues; that stretch reads PGSPPVSPGPL. Over residues 235-245 the composition is skewed to basic and acidic residues; the sequence is EHKSNQKERRS. Phosphoserine occurs at positions 245 and 248.

It belongs to the RELT family. Interacts with RELT, RELL2, OXSR1 and PLSCR1.

Its subcellular location is the cell membrane. Its function is as follows. Induces activation of MAPK14/p38 cascade, when overexpressed. Induces apoptosis, when overexpressed. This is RELT-like protein 1 (Rell1) from Mus musculus (Mouse).